The sequence spans 261 residues: Undecaprenyl-diphosphatase (261 aa).

A run of 6 helical transmembrane segments spans residues 39–59, 76–96, 99–119, 173–193, 206–226, and 238–258; these read NVLL…LIIF, LLII…KDFF, LFVS…ILWL, AAKF…VLDL, IDLM…YFAV, and LTWF…LQAA.

The protein belongs to the UppP family.

The protein localises to the cell membrane. The enzyme catalyses di-trans,octa-cis-undecaprenyl diphosphate + H2O = di-trans,octa-cis-undecaprenyl phosphate + phosphate + H(+). Functionally, catalyzes the dephosphorylation of undecaprenyl diphosphate (UPP). Confers resistance to bacitracin. This is Undecaprenyl-diphosphatase from Carboxydothermus hydrogenoformans (strain ATCC BAA-161 / DSM 6008 / Z-2901).